A 195-amino-acid chain; its full sequence is Glycerol-3-phosphate acyltransferase (195 aa).

The next 5 membrane-spanning stretches (helical) occupy residues 3 to 23 (EAAL…YFFT), 51 to 71 (GVAL…AWIG), 79 to 99 (LLVI…FLGF), 111 to 131 (IILF…LAIV), and 153 to 173 (LAMG…ALVV).

This sequence belongs to the PlsY family. Probably interacts with PlsX.

Its subcellular location is the cell membrane. It carries out the reaction an acyl phosphate + sn-glycerol 3-phosphate = a 1-acyl-sn-glycero-3-phosphate + phosphate. The protein operates within lipid metabolism; phospholipid metabolism. Catalyzes the transfer of an acyl group from acyl-phosphate (acyl-PO(4)) to glycerol-3-phosphate (G3P) to form lysophosphatidic acid (LPA). This enzyme utilizes acyl-phosphate as fatty acyl donor, but not acyl-CoA or acyl-ACP. The chain is Glycerol-3-phosphate acyltransferase from Syntrophomonas wolfei subsp. wolfei (strain DSM 2245B / Goettingen).